A 619-amino-acid polypeptide reads, in one-letter code: MVNRKWMYIFIQFLLVSSIRSDDDVFEDDEEEVTKGSDDKEEFVPSLFVAPKLSDKSTPNFFDYFPVGSKIGLTWIKSLAKKDDVDSDIAKYNGEWSIGAPTKVSIEGDLGLIVKTKARHHAIAAKLNTPFAFDANTFVVQYDIKFEEGQECGGGYLKLLSEGAEKDLANFQDKTAYTIMFGPDKCGATGKVHLIFRYKNPINGTISEYHANQPTTIGSTYWDDHNTHLFTLVVKPTGEYSVSVDGKSLYYGNMMSDVTPALTPPKQIFDETDLKPVDWDERENIEDESAVKPDDWDENEPQSVVDEAATKPYDWNEEENELIADPEAKKPQDWDEDMDGSWEAPLIDNPACKGLSGCGTWKAPTIKNPKYKGKWIRPKISNPAFKGKWTARLIDNPNYFEPKPFAGLAPITAVGIEMWTMSENILFDNILITSSEEDSSDVAKQTFYVKQKEEYRLAAATGNGNGFFQQIIDATNEKPWLWAVYILCVLLPLVAIGVFCFGKQSKPTPNFAKKSDAYSADDDRVPNLVDDDEEEIIGDEEDDVNQPGPSGSQSNPEPQDEEENAEQQSANSSQSSAAEEEDDEHVVPENEPVKPTEEFAKKSPKNTGGAKRRTARRGD.

Positions 1–21 (MVNRKWMYIFIQFLLVSSIRS) are cleaved as a signal peptide. Residue Asp109 coordinates Ca(2+). Cys152 and Cys186 are disulfide-bonded. Residues Tyr156, Lys158, Tyr177, and Asp184 each coordinate an alpha-D-glucoside. Residue Asn203 is glycosylated (N-linked (GlcNAc...) asparagine). The interval 268-401 (IFDETDLKPV…RLIDNPNYFE (134 aa)) is p domain (Extended arm). A run of 5 repeats spans residues 270–282 (DETDLKPVDWDER), 287–299 (DESAVKPDDWDEN), 306–318 (DEAATKPYDWNEE), 325–337 (DPEAKKPQDWDED), and 340–350 (GSWEAPLIDNP). 4 X approximate repeats regions lie at residues 270–337 (DETD…WDED) and 340–397 (GSWE…IDNP). Cys352 and Cys358 are joined by a disulfide. Repeat copies occupy residues 359 to 369 (GTWKAPTIKNP), 373 to 383 (GKWIRPKISNP), and 387 to 397 (GKWTARLIDNP). Glu417 contributes to the an alpha-D-glucoside binding site. Asp428 provides a ligand contact to Ca(2+). Residues 481–501 (LWAVYILCVLLPLVAIGVFCF) traverse the membrane as a helical segment. The interval 538–619 (GDEEDDVNQP…AKRRTARRGD (82 aa)) is disordered. Residues 547 to 557 (PGPSGSQSNPE) are compositionally biased toward polar residues. A compositionally biased stretch (low complexity) spans 566 to 577 (EQQSANSSQSSA). Asn571 carries an N-linked (GlcNAc...) asparagine glycan. A compositionally biased stretch (basic and acidic residues) spans 585 to 601 (HVVPENEPVKPTEEFAK). Positions 610-619 (AKRRTARRGD) are enriched in basic residues.

The protein belongs to the calreticulin family. Post-translationally, glycosylation is important for its biological activity. As to expression, expressed ubiquitously in every blastomere of the embryo up to the gastrulation stage. Expression becomes gradually restricted to the head and tail regions at the comma stage during embryogenesis. During postembryonic development, expressed prominently in the H-shaped excretory cell, in the neurons of head (including ASK and ADL) and tail (including PHA and PHB), in the dorsal and ventral nerve cords, and in the spermatheca. Expressed in the spicules of the male tail (at protein level).

Its subcellular location is the endoplasmic reticulum membrane. The protein resides in the cytoplasm. It is found in the perinuclear region. It localises to the cytoplasmic vesicle. Calcium-binding protein that interacts with newly synthesized monoglucosylated glycoproteins in the endoplasmic reticulum. It may act in assisting protein assembly and/or in the retention within the ER of unassembled protein subunits. It seems to play a major role in the quality control apparatus of the ER by the retention of incorrectly folded proteins. Required for embryogenesis and larval development under heat and ER stress conditions. May be important for germ cell development. Involved in neuronal necrotic cell death. In Caenorhabditis elegans, this protein is Calnexin (cnx-1).